A 2500-amino-acid polypeptide reads, in one-letter code: Non-reducing polyketide synthase atr1 (2500 aa).

The segment at 13 to 260 (VFSPQSKAPK…HNPENANLAL (248 aa)) is N-terminal acylcarrier protein transacylase domain (SAT). Positions 385 to 808 (TDAVAVVGMA…GSNSAVLLCQ (424 aa)) constitute a Ketosynthase family 3 (KS3) domain. Active-site for beta-ketoacyl synthase activity residues include C557, H692, and H731. The interval 908-1199 (MTFSGQSRQS…EFPERHTFLD (292 aa)) is malonyl-CoA:ACP transacylase (MAT) domain. S995 (for acyl/malonyl transferase activity) is an active-site residue. Residues 1286–1413 (PRLVEPRTKP…GDFGFTTQTQ (128 aa)) form an N-terminal hotdog fold region. Residues 1286 to 1584 (PRLVEPRTKP…FTKLPITRLE (299 aa)) enclose the PKS/mFAS DH domain. Residues 1287 to 1583 (RLVEPRTKPS…QFTKLPITRL (297 aa)) form a product template (PT) domain region. H1317 (proton acceptor; for dehydratase activity) is an active-site residue. Positions 1433 to 1584 (SETLKSKRAY…FTKLPITRLE (152 aa)) are C-terminal hotdog fold. D1495 acts as the Proton donor; for dehydratase activity in catalysis. The segment at 1594-1649 (AHNTPILKSSQQDSIVSASSSSSTEHSDDDSEDDGSRSPSHSDTSVDSESEAPADN) is disordered. Residues 1602-1617 (SSQQDSIVSASSSSST) show a composition bias toward low complexity. Positions 1649–1725 (NGAAKKLKSL…RIVAPEMAAK (77 aa)) constitute a Carrier domain. At S1683 the chain carries O-(pantetheine 4'-phosphoryl)serine. Positions 2164-2496 (KSYRIETMPY…YEFIFDVVGR (333 aa)) are thioesterase (TE) domain. Residues S2285 and D2434 each act as for thioesterase activity in the active site.

The catalysed reaction is 6 malonyl-CoA + 2 acetyl-CoA + 2 S-adenosyl-L-methionine + 3 H(+) = 4-O-demethylbarbatate + 2 S-adenosyl-L-homocysteine + 6 CO2 + 8 CoA + H2O. It functions in the pathway secondary metabolite biosynthesis; terpenoid biosynthesis. Functionally, non-reducing polyketide synthase; part of the gene cluster that mediates the biosynthesis of atranorin, a depside of polyketide origin that accumulates in the cortical or medullary layers of lichen thalli. The first step in the pathway is performed by the non-reducing polyketide synthase atr1 that produces 4-O-demethylbarbatic acid composed of two 3-methylorsellinic acid (3MOA) moieties from S-adenosyl-L-methionine (SAM), acetyl-CoA and malonyl-CoA units. The pathway continues with the actions of the cytochrome P450 monooygenase atr2 that catalizes the oxidation of c-9 and the O-methyltransferase atr3 that performs the methylation of the carboxyl group to yield atranorin, via the proatranorin II and III intermediates if atr2 acts first, or the proatranorin I intermediate if atr3 acts first. This is Non-reducing polyketide synthase atr1 from Stereocaulon alpinum (Alpine snow lichen).